A 963-amino-acid polypeptide reads, in one-letter code: Importin-13 (963 aa).

20 HEAT repeats span residues 24-54 (ENVE…QAQA), 56-88 (PQAW…KISR), 95-135 (TDQY…LSMM), 142-179 (AVAD…EFQT), 194-231 (LAVE…SWVQ), 236-268 (LQDC…NAIS), 276-325 (VNTL…ALLD), 330-372 (WQSF…DDIL), 375-438 (EAEK…YEML), 440-476 (AELL…FQSI), 487-522 (VVPG…WLAD), 524-558 (PVMI…CREC), 562-600 (LPPY…LLSA), 603-648 (VEEI…SNLF), 676-716 (PVVV…VKTL), 720-754 (FAPM…VHIF), 761-803 (FPPI…ALKR), 815-845 (VKAV…TELL), 860-893 (EDGR…FALN), and 897-931 (FSLL…QQIL). Positions 45 to 111 (AQKWLMQAQA…KAQLFTQITR (67 aa)) constitute an Importin N-terminal domain.

This sequence belongs to the importin beta family. In terms of assembly, interacts with UBC9, RAN, RBM8A, eIF-1A and PAX6.

It localises to the cytoplasm. Its subcellular location is the nucleus. Its function is as follows. Functions in nuclear protein import as nuclear transport receptor. Serves as receptor for nuclear localization signals (NLS) in cargo substrates. Is thought to mediate docking of the importin/substrate complex to the nuclear pore complex (NPC) through binding to nucleoporin and the complex is subsequently translocated through the pore by an energy requiring, Ran-dependent mechanism. At the nucleoplasmic side of the NPC, Ran binds to the importin, the importin/substrate complex dissociates and importin is re-exported from the nucleus to the cytoplasm where GTP hydrolysis releases Ran. The directionality of nuclear import is thought to be conferred by an asymmetric distribution of the GTP- and GDP-bound forms of Ran between the cytoplasm and nucleus. Mediates the nuclear import of UBC9, the RBM8A/MAGOH complex, PAX6 and probably other members of the paired homeobox family. Also mediates nuclear export of eIF-1A, and the cytoplasmic release of eIF-1A is triggered by the loading of import substrates onto IPO13. The protein is Importin-13 (IPO13) of Bos taurus (Bovine).